The following is an 876-amino-acid chain: MAP7 domain-containing protein 3 (876 aa).

The residue at position 1 (Met1) is an N-acetylmethionine. Residues 65–144 (NDIKQRLARE…DEAQKEKFTA (80 aa)) are a coiled coil. 2 disordered regions span residues 72–137 (ARER…KDEA) and 170–246 (AMAN…KPRV). Residues 171-183 (MANSESKTANKRS) are compositionally biased toward polar residues. A Phosphoserine modification is found at Ser185. Polar residues predominate over residues 191–211 (QGTSALIRQMPLSSAGLQNSV). Residues 214-244 (RKTDKERSSSLNRRDSNLHSSTDKEQAERKP) show a composition bias toward basic and acidic residues. Ser322 is subject to Phosphoserine. The segment at 407 to 475 (EAAPEGSLEA…ARDAPKKSEM (69 aa)) is disordered. The span at 425–438 (APKESVKGSPKESM) shows a compositional bias: basic and acidic residues. Ser441, Ser457, and Ser461 each carry phosphoserine. The span at 465-475 (KARDAPKKSEM) shows a compositional bias: basic and acidic residues. Phosphoserine is present on Ser490. Disordered stretches follow at residues 509-533 (SPIS…SKQS), 613-697 (QREK…KKEH), and 723-754 (RKTD…SDKD). Over residues 510–521 (PISTNRQIQKNC) the composition is skewed to polar residues. Phosphoserine is present on Ser524. Coiled coils occupy residues 558–640 (VKKK…MAKE) and 689–724 (EADK…RTRK). 2 stretches are compositionally biased toward basic and acidic residues: residues 613–639 (QREK…DMAK) and 680–697 (GDAK…KKEH). The segment covering 742–752 (EEAEADNEESD) has biased composition (acidic residues). 2 positions are modified to phosphoserine: Ser770 and Ser817. A disordered region spans residues 802-876 (PKTYFNGDLK…LPKSSDTFRQ (75 aa)). Residues 820 to 830 (DTSIQEVVSRP) show a composition bias toward polar residues. The segment covering 831–842 (SSKRMTSHTTKT) has biased composition (basic residues). The residue at position 832 (Ser832) is a Phosphoserine. Over residues 848 to 860 (TNTTSRSSAQTKS) the composition is skewed to polar residues. Basic and acidic residues predominate over residues 861-876 (EGFHDILPKSSDTFRQ).

This sequence belongs to the MAP7 family. As to quaternary structure, interacts (via N-terminus coiled coil domains) with tubulin and microtubules.

Its subcellular location is the cytoplasm. It is found in the cytoskeleton. The protein resides in the spindle. Its function is as follows. Promotes the assembly and stability of microtubules. This is MAP7 domain-containing protein 3 (MAP7D3) from Homo sapiens (Human).